We begin with the raw amino-acid sequence, 369 residues long: Aminomethyltransferase (369 aa).

This sequence belongs to the GcvT family. The glycine cleavage system is composed of four proteins: P, T, L and H.

It carries out the reaction N(6)-[(R)-S(8)-aminomethyldihydrolipoyl]-L-lysyl-[protein] + (6S)-5,6,7,8-tetrahydrofolate = N(6)-[(R)-dihydrolipoyl]-L-lysyl-[protein] + (6R)-5,10-methylene-5,6,7,8-tetrahydrofolate + NH4(+). In terms of biological role, the glycine cleavage system catalyzes the degradation of glycine. The sequence is that of Aminomethyltransferase from Xanthomonas oryzae pv. oryzae (strain PXO99A).